Consider the following 100-residue polypeptide: Large ribosomal subunit protein bL21 (100 aa).

It belongs to the bacterial ribosomal protein bL21 family. Part of the 50S ribosomal subunit. Contacts protein L20.

Functionally, this protein binds to 23S rRNA in the presence of protein L20. The chain is Large ribosomal subunit protein bL21 from Mycoplasma capricolum subsp. capricolum (strain California kid / ATCC 27343 / NCTC 10154).